A 210-amino-acid chain; its full sequence is ATP-dependent Clp protease proteolytic subunit (210 aa).

Residue serine 106 is the Nucleophile of the active site. The active site involves histidine 131.

This sequence belongs to the peptidase S14 family. Fourteen ClpP subunits assemble into 2 heptameric rings which stack back to back to give a disk-like structure with a central cavity, resembling the structure of eukaryotic proteasomes.

Its subcellular location is the cytoplasm. It catalyses the reaction Hydrolysis of proteins to small peptides in the presence of ATP and magnesium. alpha-casein is the usual test substrate. In the absence of ATP, only oligopeptides shorter than five residues are hydrolyzed (such as succinyl-Leu-Tyr-|-NHMec, and Leu-Tyr-Leu-|-Tyr-Trp, in which cleavage of the -Tyr-|-Leu- and -Tyr-|-Trp bonds also occurs).. Cleaves peptides in various proteins in a process that requires ATP hydrolysis. Has a chymotrypsin-like activity. Plays a major role in the degradation of misfolded proteins. This chain is ATP-dependent Clp protease proteolytic subunit, found in Azospirillum brasilense.